Reading from the N-terminus, the 205-residue chain is Ribosomal RNA small subunit methyltransferase G (205 aa).

Residues Gly-73, Leu-78, 124–125 (VE), and Arg-139 contribute to the S-adenosyl-L-methionine site.

This sequence belongs to the methyltransferase superfamily. RNA methyltransferase RsmG family.

It is found in the cytoplasm. It catalyses the reaction guanosine(527) in 16S rRNA + S-adenosyl-L-methionine = N(7)-methylguanosine(527) in 16S rRNA + S-adenosyl-L-homocysteine. Its function is as follows. Specifically methylates the N7 position of guanine in position 527 of 16S rRNA. This is Ribosomal RNA small subunit methyltransferase G from Erwinia tasmaniensis (strain DSM 17950 / CFBP 7177 / CIP 109463 / NCPPB 4357 / Et1/99).